A 376-amino-acid polypeptide reads, in one-letter code: Coatomer subunit delta-4 (376 aa).

The tract at residues 65-92 (LNTDTDTFTSRPKGRTSGGTTGAGKGIG) is disordered. Residues 80-92 (TSGGTTGAGKGIG) show a composition bias toward gly residues. In terms of domain architecture, MHD spans 134–376 (SDPVTVAVEE…RLVADNYQVV (243 aa)).

Belongs to the adaptor complexes medium subunit family. Delta-COP subfamily. As to quaternary structure, oligomeric complex that consists of at least the alpha, beta, beta', gamma, delta, epsilon and zeta subunits.

It is found in the cytoplasm. The protein resides in the golgi apparatus membrane. It localises to the cytoplasmic vesicle. The protein localises to the COPI-coated vesicle membrane. In terms of biological role, the coatomer is a cytosolic protein complex that binds to dilysine motifs and reversibly associates with Golgi non-clathrin-coated vesicles, which further mediate biosynthetic protein transport from the ER, via the Golgi up to the trans Golgi network. Coatomer complex is required for budding from Golgi membranes, and is essential for the retrograde Golgi-to-ER transport of dilysine-tagged proteins. In Oryza sativa subsp. japonica (Rice), this protein is Coatomer subunit delta-4.